Here is a 352-residue protein sequence, read N- to C-terminus: Maleylacetate reductase (352 aa).

NAD(+)-binding positions include 93–94 (GS) and 115–119 (TTYAG).

This sequence belongs to the iron-containing alcohol dehydrogenase family. Requires The maleylacetate reductase family of enzymes does not require any metal ion for activity, despite being related to the family III metal-dependent polyol dehydrogenases. as cofactor.

The catalysed reaction is 3-oxoadipate + NAD(+) = maleylacetate + NADH + H(+). It functions in the pathway xenobiotic degradation; gamma-hexachlorocyclohexane degradation. Catalyzes the NADH-dependent reduction of maleylacetate to beta-ketoadipate, a step in the degradation of gamma-hexachlorocyclohexane (gamma-HCH or lindane). Has an essential role in this assimilation pathway that allows S.japonicum UT26 to grow on gamma-HCH as the sole source of carbon and energy. The polypeptide is Maleylacetate reductase (Sphingobium indicum (strain DSM 16413 / CCM 7287 / MTCC 6362 / UT26 / NBRC 101211 / UT26S) (Sphingobium japonicum)).